We begin with the raw amino-acid sequence, 249 residues long: Triosephosphate isomerase (249 aa).

9–11 (NWK) provides a ligand contact to substrate. H95 functions as the Electrophile in the catalytic mechanism. Catalysis depends on E166, which acts as the Proton acceptor. Residues G172, S211, and 232-233 (GG) each bind substrate.

The protein belongs to the triosephosphate isomerase family. Homodimer.

The protein localises to the cytoplasm. It carries out the reaction D-glyceraldehyde 3-phosphate = dihydroxyacetone phosphate. It functions in the pathway carbohydrate biosynthesis; gluconeogenesis. Its pathway is carbohydrate degradation; glycolysis; D-glyceraldehyde 3-phosphate from glycerone phosphate: step 1/1. In terms of biological role, involved in the gluconeogenesis. Catalyzes stereospecifically the conversion of dihydroxyacetone phosphate (DHAP) to D-glyceraldehyde-3-phosphate (G3P). This is Triosephosphate isomerase from Legionella pneumophila subsp. pneumophila (strain Philadelphia 1 / ATCC 33152 / DSM 7513).